We begin with the raw amino-acid sequence, 341 residues long: HTH-type transcriptional repressor PurR (341 aa).

One can recognise an HTH lacI-type domain in the interval 2-56 (ATIKDVAKRANVSTTTVSHVINKTRFVAEETRNAVWAAIKELHYSPSAVARSLKV). A DNA-binding region (H-T-H motif) is located at residues 4-23 (IKDVAKRANVSTTTVSHVIN). A DNA-binding region spans residues 48 to 56 (SAVARSLKV). Hypoxanthine contacts are provided by Tyr-73, Arg-190, Thr-192, Phe-221, and Asp-275.

In terms of assembly, homodimer.

It participates in purine metabolism; purine nucleotide biosynthesis [regulation]. Its function is as follows. Is the main repressor of the genes involved in the de novo synthesis of purine nucleotides, regulating purB, purC, purEK, purF, purHD, purL, purMN and guaBA expression. PurR is allosterically activated to bind its cognate DNA by binding the purine corepressors, hypoxanthine or guanine, thereby effecting transcription repression. In Escherichia fergusonii (strain ATCC 35469 / DSM 13698 / CCUG 18766 / IAM 14443 / JCM 21226 / LMG 7866 / NBRC 102419 / NCTC 12128 / CDC 0568-73), this protein is HTH-type transcriptional repressor PurR.